A 108-amino-acid chain; its full sequence is Large ribosomal subunit protein uL22 (108 aa).

Belongs to the universal ribosomal protein uL22 family. As to quaternary structure, part of the 50S ribosomal subunit.

In terms of biological role, this protein binds specifically to 23S rRNA; its binding is stimulated by other ribosomal proteins, e.g. L4, L17, and L20. It is important during the early stages of 50S assembly. It makes multiple contacts with different domains of the 23S rRNA in the assembled 50S subunit and ribosome. Its function is as follows. The globular domain of the protein is located near the polypeptide exit tunnel on the outside of the subunit, while an extended beta-hairpin is found that lines the wall of the exit tunnel in the center of the 70S ribosome. This Desulfatibacillum aliphaticivorans protein is Large ribosomal subunit protein uL22.